The primary structure comprises 66 residues: Protein translocase subunit SecE (66 aa).

Residues L29–V49 form a helical membrane-spanning segment.

This sequence belongs to the SecE/SEC61-gamma family. In terms of assembly, component of the Sec protein translocase complex. Heterotrimer consisting of SecY, SecE and SecG subunits. The heterotrimers can form oligomers, although 1 heterotrimer is thought to be able to translocate proteins. Interacts with the ribosome. Interacts with SecDF, and other proteins may be involved. Interacts with SecA.

It is found in the cell inner membrane. In terms of biological role, essential subunit of the Sec protein translocation channel SecYEG. Clamps together the 2 halves of SecY. May contact the channel plug during translocation. The polypeptide is Protein translocase subunit SecE (Rickettsia rickettsii).